The following is a 114-amino-acid chain: Ribosome-binding factor A (114 aa).

This sequence belongs to the RbfA family. Monomer. Binds 30S ribosomal subunits, but not 50S ribosomal subunits or 70S ribosomes.

It is found in the cytoplasm. In terms of biological role, one of several proteins that assist in the late maturation steps of the functional core of the 30S ribosomal subunit. Associates with free 30S ribosomal subunits (but not with 30S subunits that are part of 70S ribosomes or polysomes). Required for efficient processing of 16S rRNA. May interact with the 5'-terminal helix region of 16S rRNA. The polypeptide is Ribosome-binding factor A (Macrococcus caseolyticus (strain JCSC5402) (Macrococcoides caseolyticum)).